A 113-amino-acid chain; its full sequence is Large ribosomal subunit protein uL22 (113 aa).

Belongs to the universal ribosomal protein uL22 family. In terms of assembly, part of the 50S ribosomal subunit.

Functionally, this protein binds specifically to 23S rRNA; its binding is stimulated by other ribosomal proteins, e.g. L4, L17, and L20. It is important during the early stages of 50S assembly. It makes multiple contacts with different domains of the 23S rRNA in the assembled 50S subunit and ribosome. In terms of biological role, the globular domain of the protein is located near the polypeptide exit tunnel on the outside of the subunit, while an extended beta-hairpin is found that lines the wall of the exit tunnel in the center of the 70S ribosome. The protein is Large ribosomal subunit protein uL22 of Geobacillus thermodenitrificans (strain NG80-2).